We begin with the raw amino-acid sequence, 107 residues long: Small ribosomal subunit protein uS17 (107 aa).

It belongs to the universal ribosomal protein uS17 family. In terms of assembly, part of the 30S ribosomal subunit.

Its function is as follows. One of the primary rRNA binding proteins, it binds specifically to the 5'-end of 16S ribosomal RNA. The polypeptide is Small ribosomal subunit protein uS17 (Nitrosopumilus maritimus (strain SCM1)).